Consider the following 156-residue polypeptide: Snaclec A15 (156 aa).

The first 23 residues, 1–23 (MGRFIFVRFGLLVVFLSLSGTGA), serve as a signal peptide directing secretion. Intrachain disulfides connect Cys-27–Cys-38, Cys-55–Cys-152, and Cys-127–Cys-144. The C-type lectin domain maps to 34 to 153 (YDQHCYKAFD…CGDDYPFVCK (120 aa)). N-linked (GlcNAc...) asparagine glycosylation is present at Asn-141.

This sequence belongs to the snaclec family. Heterodimer; disulfide-linked. In terms of tissue distribution, expressed by the venom gland.

Its subcellular location is the secreted. In terms of biological role, interferes with one step of hemostasis (modulation of platelet aggregation, or coagulation cascade, for example). In Macrovipera lebetinus (Levantine viper), this protein is Snaclec A15.